The following is a 955-amino-acid chain: 2-oxoglutarate dehydrogenase E1 component (955 aa).

This sequence belongs to the alpha-ketoglutarate dehydrogenase family. In terms of assembly, homodimer. Part of the 2-oxoglutarate dehydrogenase (OGDH) complex composed of E1 (2-oxoglutarate dehydrogenase), E2 (dihydrolipoamide succinyltransferase) and E3 (dihydrolipoamide dehydrogenase); the complex contains multiple copies of the three enzymatic components (E1, E2 and E3). Thiamine diphosphate serves as cofactor.

The enzyme catalyses N(6)-[(R)-lipoyl]-L-lysyl-[protein] + 2-oxoglutarate + H(+) = N(6)-[(R)-S(8)-succinyldihydrolipoyl]-L-lysyl-[protein] + CO2. Its function is as follows. E1 component of the 2-oxoglutarate dehydrogenase (OGDH) complex which catalyzes the decarboxylation of 2-oxoglutarate, the first step in the conversion of 2-oxoglutarate to succinyl-CoA and CO(2). The polypeptide is 2-oxoglutarate dehydrogenase E1 component (Bacillus cereus (strain 03BB102)).